A 101-amino-acid chain; its full sequence is MENLAELPSPWFVYLVRCANNALYCGITTDVSRRFAQHQKGRGAKALRGKGPLELVWSLPVADGKSAALKLEYRIKALSKSQKEALVAGMARIDQLEIIFQ.

The GIY-YIG domain occupies 9-85 (SPWFVYLVRC…KALSKSQKEA (77 aa)).

This sequence belongs to the UPF0213 family.

In Vibrio cholerae serotype O1 (strain ATCC 39315 / El Tor Inaba N16961), this protein is UPF0213 protein VC_A0739.